The chain runs to 254 residues: Phosphate import ATP-binding protein PstB 2 (254 aa).

An ABC transporter domain is found at 9–249 (FNIDNLNLFY…PRDDRTRGYV (241 aa)). 41–48 (GPSGCGKS) contacts ATP.

This sequence belongs to the ABC transporter superfamily. Phosphate importer (TC 3.A.1.7) family. In terms of assembly, the complex is composed of two ATP-binding proteins (PstB), two transmembrane proteins (PstC and PstA) and a solute-binding protein (PstS).

The protein resides in the cell inner membrane. The enzyme catalyses phosphate(out) + ATP + H2O = ADP + 2 phosphate(in) + H(+). Functionally, part of the ABC transporter complex PstSACB involved in phosphate import. Responsible for energy coupling to the transport system. In Photobacterium profundum (strain SS9), this protein is Phosphate import ATP-binding protein PstB 2.